We begin with the raw amino-acid sequence, 497 residues long: Probable cytosol aminopeptidase (497 aa).

Mn(2+)-binding residues include lysine 267 and aspartate 272. Lysine 279 is an active-site residue. Residues aspartate 290, aspartate 349, and glutamate 351 each coordinate Mn(2+). Arginine 353 is a catalytic residue.

Belongs to the peptidase M17 family. The cofactor is Mn(2+).

The protein resides in the cytoplasm. It catalyses the reaction Release of an N-terminal amino acid, Xaa-|-Yaa-, in which Xaa is preferably Leu, but may be other amino acids including Pro although not Arg or Lys, and Yaa may be Pro. Amino acid amides and methyl esters are also readily hydrolyzed, but rates on arylamides are exceedingly low.. It carries out the reaction Release of an N-terminal amino acid, preferentially leucine, but not glutamic or aspartic acids.. Presumably involved in the processing and regular turnover of intracellular proteins. Catalyzes the removal of unsubstituted N-terminal amino acids from various peptides. This chain is Probable cytosol aminopeptidase, found in Pseudomonas entomophila (strain L48).